Consider the following 240-residue polypeptide: Acyl-protein thioesterase 1 (240 aa).

Active-site charge relay system residues include Ser129, Asp183, and His219.

It belongs to the AB hydrolase superfamily. AB hydrolase 2 family.

It localises to the cytoplasm. It is found in the nucleus. The enzyme catalyses S-hexadecanoyl-L-cysteinyl-[protein] + H2O = L-cysteinyl-[protein] + hexadecanoate + H(+). Functionally, hydrolyzes fatty acids from S-acylated cysteine residues in proteins with a strong preference for palmitoylated G-alpha proteins over other acyl substrates. Mediates the deacylation of G-alpha proteins such as GPA1 in vivo, but has weak or no activity toward palmitoylated Ras proteins. Has weak lysophospholipase activity in vitro; however such activity may not exist in vivo. In Mycosarcoma maydis (Corn smut fungus), this protein is Acyl-protein thioesterase 1.